Reading from the N-terminus, the 229-residue chain is Uracil-DNA glycosylase (229 aa).

The active-site Proton acceptor is the aspartate 64.

Belongs to the uracil-DNA glycosylase (UDG) superfamily. UNG family.

It localises to the cytoplasm. It catalyses the reaction Hydrolyzes single-stranded DNA or mismatched double-stranded DNA and polynucleotides, releasing free uracil.. Functionally, excises uracil residues from the DNA which can arise as a result of misincorporation of dUMP residues by DNA polymerase or due to deamination of cytosine. This chain is Uracil-DNA glycosylase, found in Salmonella arizonae (strain ATCC BAA-731 / CDC346-86 / RSK2980).